The chain runs to 710 residues: Secretin OutD (710 aa).

An N-terminal signal peptide occupies residues 1 to 27 (MLGKGIKKSWGWLGLTVLLLGSPCGWA). Residues 28–105 (AEFSASFKGT…DNGVLKVIRS (78 aa)) form an N0 region. The tract at residues 123 to 190 (IGDELVTRVV…DIVNTVDKTG (68 aa)) is N1. The N2 stretch occupies residues 192-262 (REMVTVPLTY…VEMIRQLDRK (71 aa)). Residues 288–399 (GNGTSGNRNS…INQLDIRRPQ (112 aa)) form an N3 region. The disordered stretch occupies residues 289 to 353 (NGTSGNRNSS…AFGSTSSSGG (65 aa)). The tract at residues 401–648 (LVEAIIAEIQ…MLFLRPTIIR (248 aa)) is secretin. The interval 691-710 (TYTFRQVQSSISDFYKPEGR) is s domain.

The protein belongs to the bacterial secretin family. GSP D subfamily. In terms of assembly, forms a cylindrical channel with 15 subunits. Interacts with pilotin OutS.

Its subcellular location is the cell outer membrane. In terms of biological role, involved in a type II secretion system (T2SS, formerly general secretion pathway, GSP) for the export of proteins. Required for the translocation of the multiple pectic enzymes. This subunit forms the outer membrane channel. The chain is Secretin OutD (outD) from Dickeya dadantii (strain 3937) (Erwinia chrysanthemi (strain 3937)).